Reading from the N-terminus, the 393-residue chain is NAD(P)H-quinone oxidoreductase subunit H, chloroplastic (393 aa).

The protein belongs to the complex I 49 kDa subunit family. NDH is composed of at least 16 different subunits, 5 of which are encoded in the nucleus.

It is found in the plastid. It localises to the chloroplast thylakoid membrane. The catalysed reaction is a plastoquinone + NADH + (n+1) H(+)(in) = a plastoquinol + NAD(+) + n H(+)(out). It catalyses the reaction a plastoquinone + NADPH + (n+1) H(+)(in) = a plastoquinol + NADP(+) + n H(+)(out). Functionally, NDH shuttles electrons from NAD(P)H:plastoquinone, via FMN and iron-sulfur (Fe-S) centers, to quinones in the photosynthetic chain and possibly in a chloroplast respiratory chain. The immediate electron acceptor for the enzyme in this species is believed to be plastoquinone. Couples the redox reaction to proton translocation, and thus conserves the redox energy in a proton gradient. This chain is NAD(P)H-quinone oxidoreductase subunit H, chloroplastic, found in Huperzia lucidula (Shining clubmoss).